The chain runs to 389 residues: Chalcone synthase H2 (389 aa).

Residue C164 is part of the active site.

The protein belongs to the thiolase-like superfamily. Chalcone/stilbene synthases family.

The protein resides in the cytoplasm. It carries out the reaction (E)-4-coumaroyl-CoA + 3 malonyl-CoA + 3 H(+) = 2',4,4',6'-tetrahydroxychalcone + 3 CO2 + 4 CoA. It participates in secondary metabolite biosynthesis; flavonoid biosynthesis. In terms of biological role, involved in the biosynthesis of prenylated phenolics natural products which contribute to the bitter taste of beer and display broad biological activities. Chalcone synthase that can use 4-coumaroyl-CoA to produce 4,2',4',6'-tetrahydroxychalcone (also termed naringenin-chalcone or chalcone) which can, under specific conditions, spontaneously isomerize into naringenin. The sequence is that of Chalcone synthase H2 from Humulus lupulus (European hop).